A 165-amino-acid chain; its full sequence is Regulator of ribonuclease activity A (165 aa).

This sequence belongs to the RraA family. As to quaternary structure, homotrimer. Binds to both RNA-binding sites in the C-terminal region of Rne and to RhlB.

The protein resides in the cytoplasm. Its function is as follows. Globally modulates RNA abundance by binding to RNase E (Rne) and regulating its endonucleolytic activity. Can modulate Rne action in a substrate-dependent manner by altering the composition of the degradosome. Modulates RNA-binding and helicase activities of the degradosome. This Pseudoalteromonas translucida (strain TAC 125) protein is Regulator of ribonuclease activity A.